A 633-amino-acid polypeptide reads, in one-letter code: 1-deoxy-D-xylulose-5-phosphate synthase (633 aa).

Thiamine diphosphate-binding positions include H72 and 113-115; that span reads GHS. D144 serves as a coordination point for Mg(2+). Thiamine diphosphate-binding positions include 145–146, N173, Y284, and E367; that span reads GA. Position 173 (N173) interacts with Mg(2+).

This sequence belongs to the transketolase family. DXPS subfamily. As to quaternary structure, homodimer. It depends on Mg(2+) as a cofactor. The cofactor is thiamine diphosphate.

The enzyme catalyses D-glyceraldehyde 3-phosphate + pyruvate + H(+) = 1-deoxy-D-xylulose 5-phosphate + CO2. The protein operates within metabolic intermediate biosynthesis; 1-deoxy-D-xylulose 5-phosphate biosynthesis; 1-deoxy-D-xylulose 5-phosphate from D-glyceraldehyde 3-phosphate and pyruvate: step 1/1. Functionally, catalyzes the acyloin condensation reaction between C atoms 2 and 3 of pyruvate and glyceraldehyde 3-phosphate to yield 1-deoxy-D-xylulose-5-phosphate (DXP). In Bacillus licheniformis (strain ATCC 14580 / DSM 13 / JCM 2505 / CCUG 7422 / NBRC 12200 / NCIMB 9375 / NCTC 10341 / NRRL NRS-1264 / Gibson 46), this protein is 1-deoxy-D-xylulose-5-phosphate synthase.